The sequence spans 229 residues: Peptidase E (229 aa).

Active-site charge relay system residues include Ser120, Asp135, and His157.

This sequence belongs to the peptidase S51 family.

It localises to the cytoplasm. It carries out the reaction Dipeptidase E catalyzes the hydrolysis of dipeptides Asp-|-Xaa. It does not act on peptides with N-terminal Glu, Asn or Gln, nor does it cleave isoaspartyl peptides.. Functionally, hydrolyzes dipeptides containing N-terminal aspartate residues. May play a role in allowing the cell to use peptide aspartate to spare carbon otherwise required for the synthesis of the aspartate family of amino acids. The polypeptide is Peptidase E (Shigella sonnei (strain Ss046)).